We begin with the raw amino-acid sequence, 263 residues long: Methylesterase 2 (263 aa).

The Acyl-ester intermediate role is filled by S85. Active-site charge relay system residues include D213 and H241.

This sequence belongs to the AB hydrolase superfamily. Methylesterase family.

The catalysed reaction is methyl (indol-3-yl)acetate + H2O = (indol-3-yl)acetate + methanol + H(+). It carries out the reaction methyl (-)-jasmonate + H2O = jasmonate + methanol + H(+). The enzyme catalyses methyl salicylate + H2O = salicylate + methanol + H(+). The protein operates within plant hormone biosynthesis. It participates in lipid metabolism; oxylipin biosynthesis. With respect to regulation, esterase activity is down-regulated by salicylic acid (SA). Down-regulated by agrochemicals Paraoxon, 3,4-DCl and Profenofos. In terms of biological role, methylesterase shown to have carboxylesterase activity, methyl indole-3-acetic acid (MeIAA) esterase activity, methyl salicylate (MeSA) esterase activity and methyl jasmonate (MeJA) esterase activity in vitro. The sequence is that of Methylesterase 2 from Arabidopsis thaliana (Mouse-ear cress).